The chain runs to 637 residues: Phosphomethylpyrimidine synthase (637 aa).

Residues Asn-242, Met-271, Tyr-300, His-336, 356–358 (SRG), 397–400 (DGLR), and Glu-436 contribute to the substrate site. Residue His-440 coordinates Zn(2+). Tyr-463 provides a ligand contact to substrate. His-504 contacts Zn(2+). [4Fe-4S] cluster-binding residues include Cys-584, Cys-587, and Cys-592.

It belongs to the ThiC family. As to quaternary structure, homodimer. [4Fe-4S] cluster is required as a cofactor.

It catalyses the reaction 5-amino-1-(5-phospho-beta-D-ribosyl)imidazole + S-adenosyl-L-methionine = 4-amino-2-methyl-5-(phosphooxymethyl)pyrimidine + CO + 5'-deoxyadenosine + formate + L-methionine + 3 H(+). The protein operates within cofactor biosynthesis; thiamine diphosphate biosynthesis. Catalyzes the synthesis of the hydroxymethylpyrimidine phosphate (HMP-P) moiety of thiamine from aminoimidazole ribotide (AIR) in a radical S-adenosyl-L-methionine (SAM)-dependent reaction. This is Phosphomethylpyrimidine synthase from Bordetella pertussis (strain Tohama I / ATCC BAA-589 / NCTC 13251).